The primary structure comprises 984 residues: Putative formate dehydrogenase SAUSA300_2258 (984 aa).

A 2Fe-2S ferredoxin-type domain is found at 3–79; sequence EHLVVTLDGK…PMTVNTVNND (77 aa). [2Fe-2S] cluster-binding residues include Cys-37, Cys-48, Cys-51, and Cys-63. Residues 79-119 enclose the 4Fe-4S His(Cys)3-ligated-type domain; that stretch reads DVKDAQKEALDRILEKHMLYCTVCDYNNGDCEIHNTMDAWG. [4Fe-4S] cluster is bound by residues His-95, Cys-99, Cys-102, Cys-109, Cys-147, Cys-150, Cys-153, Cys-157, Cys-190, Cys-193, Cys-196, Cys-200, Cys-264, Cys-267, Cys-271, and Cys-299. 4Fe-4S ferredoxin-type domains are found at residues 138–165 and 181–211; these read PFYRYDPNQCILCGRCVEACQDIEVNET and NDVPINESSCVSCGQCATVCPCNAMMEVNME. A formate dehydrogenase region spans residues 252 to 984; sequence MRKERIKKTK…YVFPGNQVDK (733 aa). In terms of domain architecture, 4Fe-4S Mo/W bis-MGD-type spans 257-313; that stretch reads IKKTKTVCTYCGVGCSFEVWTKDREILKVQPSHDSPANKIATCVKGKFSWGHINSDQ.

It in the C-terminal section; belongs to the prokaryotic molybdopterin-containing oxidoreductase family. [2Fe-2S] cluster is required as a cofactor. [4Fe-4S] cluster serves as cofactor. It depends on Mo-bis(molybdopterin guanine dinucleotide) as a cofactor.

It catalyses the reaction formate + NAD(+) = CO2 + NADH. The protein is Putative formate dehydrogenase SAUSA300_2258 of Staphylococcus aureus (strain USA300).